A 209-amino-acid chain; its full sequence is MSAKKRTASSARWMQEHFDDHYVKLAQKRGLRSRAAFKLEEIQQKDHLIRQGMTVVDLGAAPGGWSQVAVKLAGDNGKVIACDILPMDPIVGVDFLQGDFREENVLNALLDRVGEDKVDVVLSDMAPNMSGSDGVDQPRAMYLVELALEMCHQVLAPNGCFAVKVFQGEGFDEYIKSVKQAFKTVKTRKPDSSRARSREVYLVATGYKL.

Gly-63, Trp-65, Asp-83, Asp-99, and Asp-124 together coordinate S-adenosyl-L-methionine. Lys-164 functions as the Proton acceptor in the catalytic mechanism.

It belongs to the class I-like SAM-binding methyltransferase superfamily. RNA methyltransferase RlmE family.

Its subcellular location is the cytoplasm. It carries out the reaction uridine(2552) in 23S rRNA + S-adenosyl-L-methionine = 2'-O-methyluridine(2552) in 23S rRNA + S-adenosyl-L-homocysteine + H(+). Functionally, specifically methylates the uridine in position 2552 of 23S rRNA at the 2'-O position of the ribose in the fully assembled 50S ribosomal subunit. This Shewanella denitrificans (strain OS217 / ATCC BAA-1090 / DSM 15013) protein is Ribosomal RNA large subunit methyltransferase E.